The following is a 217-amino-acid chain: Coiled-coil domain-containing protein 124-A (217 aa).

Positions 1 to 128 (MPKKFQGENT…HLEMPLEENV (128 aa)) are disordered. Composition is skewed to basic and acidic residues over residues 18–45 (RKAE…DDKH), 52–74 (RKED…QRLL), and 95–128 (TRAE…EENV). Positions 46 to 82 (VARKGQRKEDKEKKRLEQLERKKESQRLLDEEDSKMK) form a coiled coil.

It belongs to the CCDC124 family. As to quaternary structure, associates with translationally inactive ribosomes in the nonrotated state.

The protein resides in the cytoplasm. It is found in the cytoskeleton. Its subcellular location is the microtubule organizing center. The protein localises to the centrosome. It localises to the midbody. In terms of biological role, ribosome-binding protein involved in ribosome hibernation: associates with translationally inactive ribosomes and stabilizes the nonrotated conformation of the 80S ribosome, thereby promoting ribosome preservation and storage. The sequence is that of Coiled-coil domain-containing protein 124-A (ccdc124-a) from Xenopus laevis (African clawed frog).